The primary structure comprises 383 residues: Succinate--CoA ligase [ADP-forming] subunit beta (383 aa).

One can recognise an ATP-grasp domain in the interval 9–236; that stretch reads KELLGRFGLR…VEAADPQEHR (228 aa). ATP-binding positions include lysine 45, 52–54, glutamate 91, alanine 94, and glutamate 99; that span reads GRG. Positions 191 and 205 each coordinate Mg(2+). Residues asparagine 256 and 313 to 315 contribute to the substrate site; that span reads GIT.

Belongs to the succinate/malate CoA ligase beta subunit family. Heterotetramer of two alpha and two beta subunits. The cofactor is Mg(2+).

It carries out the reaction succinate + ATP + CoA = succinyl-CoA + ADP + phosphate. The enzyme catalyses GTP + succinate + CoA = succinyl-CoA + GDP + phosphate. It functions in the pathway carbohydrate metabolism; tricarboxylic acid cycle; succinate from succinyl-CoA (ligase route): step 1/1. Functionally, succinyl-CoA synthetase functions in the citric acid cycle (TCA), coupling the hydrolysis of succinyl-CoA to the synthesis of either ATP or GTP and thus represents the only step of substrate-level phosphorylation in the TCA. The beta subunit provides nucleotide specificity of the enzyme and binds the substrate succinate, while the binding sites for coenzyme A and phosphate are found in the alpha subunit. The protein is Succinate--CoA ligase [ADP-forming] subunit beta of Rubrobacter xylanophilus (strain DSM 9941 / JCM 11954 / NBRC 16129 / PRD-1).